Here is a 377-residue protein sequence, read N- to C-terminus: Spermidine/putrescine import ATP-binding protein PotA (377 aa).

An ABC transporter domain is found at 18-248; the sequence is IRLSGISKSF…PKNLFVARFI (231 aa). Residue 50–57 coordinates ATP; that stretch reads GPSGCGKT.

It belongs to the ABC transporter superfamily. Spermidine/putrescine importer (TC 3.A.1.11.1) family. As to quaternary structure, the complex is composed of two ATP-binding proteins (PotA), two transmembrane proteins (PotB and PotC) and a solute-binding protein (PotD).

Its subcellular location is the cell inner membrane. It carries out the reaction ATP + H2O + polyamine-[polyamine-binding protein]Side 1 = ADP + phosphate + polyamineSide 2 + [polyamine-binding protein]Side 1.. Its function is as follows. Part of the ABC transporter complex PotABCD involved in spermidine/putrescine import. Responsible for energy coupling to the transport system. The sequence is that of Spermidine/putrescine import ATP-binding protein PotA from Vibrio vulnificus (strain CMCP6).